The sequence spans 338 residues: Ketol-acid reductoisomerase (NADP(+)) (338 aa).

The region spanning 1–181 (MKVYYDKDAD…GGTKGGVIET (181 aa)) is the KARI N-terminal Rossmann domain. Residues 24-27 (YGSQ), arginine 47, and serine 52 contribute to the NADP(+) site. Histidine 107 is an active-site residue. Glycine 133 contacts NADP(+). One can recognise a KARI C-terminal knotted domain in the interval 182–327 (NFREETETDL…GQLRDMMPWI (146 aa)). Aspartate 190, glutamate 194, glutamate 226, and glutamate 230 together coordinate Mg(2+). Substrate is bound at residue serine 251.

Belongs to the ketol-acid reductoisomerase family. The cofactor is Mg(2+).

The enzyme catalyses (2R)-2,3-dihydroxy-3-methylbutanoate + NADP(+) = (2S)-2-acetolactate + NADPH + H(+). The catalysed reaction is (2R,3R)-2,3-dihydroxy-3-methylpentanoate + NADP(+) = (S)-2-ethyl-2-hydroxy-3-oxobutanoate + NADPH + H(+). It participates in amino-acid biosynthesis; L-isoleucine biosynthesis; L-isoleucine from 2-oxobutanoate: step 2/4. The protein operates within amino-acid biosynthesis; L-valine biosynthesis; L-valine from pyruvate: step 2/4. In terms of biological role, involved in the biosynthesis of branched-chain amino acids (BCAA). Catalyzes an alkyl-migration followed by a ketol-acid reduction of (S)-2-acetolactate (S2AL) to yield (R)-2,3-dihydroxy-isovalerate. In the isomerase reaction, S2AL is rearranged via a Mg-dependent methyl migration to produce 3-hydroxy-3-methyl-2-ketobutyrate (HMKB). In the reductase reaction, this 2-ketoacid undergoes a metal-dependent reduction by NADPH to yield (R)-2,3-dihydroxy-isovalerate. The protein is Ketol-acid reductoisomerase (NADP(+)) of Aromatoleum aromaticum (strain DSM 19018 / LMG 30748 / EbN1) (Azoarcus sp. (strain EbN1)).